The primary structure comprises 217 residues: 3-demethoxyubiquinol 3-hydroxylase (217 aa).

Positions 66, 96, 99, 148, 180, and 183 each coordinate Fe cation.

This sequence belongs to the COQ7 family. Requires Fe cation as cofactor.

It localises to the cell membrane. The enzyme catalyses a 5-methoxy-2-methyl-3-(all-trans-polyprenyl)benzene-1,4-diol + AH2 + O2 = a 3-demethylubiquinol + A + H2O. Its pathway is cofactor biosynthesis; ubiquinone biosynthesis. Catalyzes the hydroxylation of 2-nonaprenyl-3-methyl-6-methoxy-1,4-benzoquinol during ubiquinone biosynthesis. The sequence is that of 3-demethoxyubiquinol 3-hydroxylase from Xanthomonas campestris pv. campestris (strain 8004).